Consider the following 277-residue polypeptide: Small ribosomal subunit protein uS2 (277 aa).

Composition is skewed to basic and acidic residues over residues 227–256 (QARA…RTEA) and 267–277 (SEAKAEGNTEA). Residues 227-277 (QARAERQEAAAKEAAGDADKAPAEAERTEAPAEEAPAEAQSEAKAEGNTEA) form a disordered region.

The protein belongs to the universal ribosomal protein uS2 family.

This Corynebacterium jeikeium (strain K411) protein is Small ribosomal subunit protein uS2.